The following is a 143-amino-acid chain: MATPLDNCLRPFPDPMVKVTAETKKISEVSSYVSANNKKNSFWGSGLLYPVALLRCQDCWAGHQTHVLSKEFTSYFSSGAGREAQHQPSAVLGSLIWLRRVYLLRAMVVHGGSQPCQRWLVIRMEVGGHPSFPGHAWLTFHLN.

This is an uncharacterized protein from Homo sapiens (Human).